Reading from the N-terminus, the 494-residue chain is Smoothelin-like protein 1 (494 aa).

Basic and acidic residues-rich tracts occupy residues 1–10 (MEQKEGKLSE), 74–104 (DEVK…KEET), 112–166 (TGRK…KATV), and 179–232 (TGQR…KEEA). The disordered stretch occupies residues 1 to 348 (MEQKEGKLSE…ARPRGPRAQN (348 aa)). Residues 123–145 (KEAEEKESTLASEKQKAEEKEAK) adopt a coiled-coil conformation. Residues 233 to 255 (DAKEEAEDAEEAEPGSPSEEQEQ) are compositionally biased toward acidic residues. 2 stretches are compositionally biased toward low complexity: residues 269–279 (PSSPEEWPESP) and 302–314 (SPSA…SDVP). Residues 324–335 (GEKKEKAPERRV) show a composition bias toward basic and acidic residues. S336 carries the post-translational modification Phosphoserine. In terms of domain architecture, Calponin-homology (CH) spans 378 to 484 (GGVKNMLLEW…YIQELYRSLV (107 aa)). Residues 476–494 (IQELYRSLVQKGLVKTKKK) are calmodulin-binding.

Belongs to the smoothelin family. As to quaternary structure, interacts with PPP1R12A. In terms of processing, maximal phosphorylation of Ser-336 correlates with maximal relaxation of aorta in response to acetylcholine. As to expression, expressed in striated muscles, specifically in type 2a fibers (at protein level).

The protein resides in the cytoplasm. Its subcellular location is the myofibril. It is found in the sarcomere. It localises to the i band. The protein localises to the m line. The protein resides in the nucleus. Functionally, plays a role in the regulation of contractile properties of both striated and smooth muscles. When unphosphorylated, may inhibit myosin dephosphorylation. Phosphorylation at Ser-299 reduces this inhibitory activity. This chain is Smoothelin-like protein 1 (SMTNL1), found in Homo sapiens (Human).